The primary structure comprises 424 residues: Tol-Pal system protein TolB (424 aa).

The signal sequence occupies residues 1–20 (MKQFIVFILSLYTTLSWAVL).

This sequence belongs to the TolB family. As to quaternary structure, the Tol-Pal system is composed of five core proteins: the inner membrane proteins TolA, TolQ and TolR, the periplasmic protein TolB and the outer membrane protein Pal. They form a network linking the inner and outer membranes and the peptidoglycan layer.

Its subcellular location is the periplasm. Functionally, part of the Tol-Pal system, which plays a role in outer membrane invagination during cell division and is important for maintaining outer membrane integrity. The sequence is that of Tol-Pal system protein TolB from Vesicomyosocius okutanii subsp. Calyptogena okutanii (strain HA).